Reading from the N-terminus, the 442-residue chain is Putative amino acid transporter YuiF (442 aa).

11 helical membrane-spanning segments follow: residues 21–41 (IVIA…LGLG), 51–71 (LGGN…AAAL), 103–123 (LIVL…PVHI), 146–166 (LIAC…PVGF), 190–210 (IPYA…LSVI), 236–256 (IGIA…LSQT), 259–279 (VEGM…SGVM), 292–312 (MVLM…SNVL), 335–355 (LGAL…GSSF), 364–384 (IFVP…AIIG), and 421–441 (VPTF…AALV).

It localises to the cell membrane. This chain is Putative amino acid transporter YuiF (yuiF), found in Bacillus subtilis (strain 168).